We begin with the raw amino-acid sequence, 685 residues long: MRKILVTNALPYANGPIHMGHLLGYIQADIWVRAMRAMGHDVTYVCADDAHGTAIMLRAEANGISPEKQIANVQQEHIRDFDGFGVHFDHYDSTHSAENKVRSEDIYLKNREAGNIAVRPITQLFDPEKQMFLSDRFIKGTCPKCKAEDQYGDACEVCGTTYNATELLNPRSTLSGATPVEKSSDHYFFKLPNFGEYLQKWTRDEGRLPVSIANKLDEWFEAGLADWDISRDAPYFGFEIPDAPNKYFYVWVDAPIGYMSSFENYIKAKRPELNFDDYWKKDSQNEVYHFIGKDIVYFHALFWPAMLEGANYRTPSGLFVNGFLTVNGQKMSKSRGTFIKAETYLQHLNPEYLRYYFASKLSDKVEDSDLNLDDFVQKVNSDLVGKVVNIASRCAKFINSSFNNTLSANCAEPELVQSFIDAGDSIAQAYEAREFSAAIREIMALADKANQYIDEKKPWALAKQEGQEQQVHNVCSVGINLFRQLAIYLSPVLPTLAAQVQAFLQLESFDFASRQQILLAHEIAQFQPLMQRVDPKAVAAMVDASKDSLAATAEAPKAEKKKEKKVEKKPEPKVGEAEIIGIEDFIKVDLRVALVQEAATVEGSDKLLQLTLDVGEAEPRNVFSGIREFYQPEDLKGKLVVMVANLAPRKMRFGISNGMVLAAGNGDGVWVISPDSGAKPGDKVS.

4 residues coordinate Zn(2+): C142, C145, C155, and C158. Positions 330-334 match the 'KMSKS' region motif; the sequence is KMSKS. ATP is bound at residue K333. One can recognise a tRNA-binding domain in the interval 584–685; it reads DFIKVDLRVA…SGAKPGDKVS (102 aa).

Belongs to the class-I aminoacyl-tRNA synthetase family. MetG type 1 subfamily. Homodimer. Requires Zn(2+) as cofactor.

It is found in the cytoplasm. It catalyses the reaction tRNA(Met) + L-methionine + ATP = L-methionyl-tRNA(Met) + AMP + diphosphate. In terms of biological role, is required not only for elongation of protein synthesis but also for the initiation of all mRNA translation through initiator tRNA(fMet) aminoacylation. The protein is Methionine--tRNA ligase of Acinetobacter baylyi (strain ATCC 33305 / BD413 / ADP1).